We begin with the raw amino-acid sequence, 203 residues long: Ribosomal RNA small subunit methyltransferase G (203 aa).

S-adenosyl-L-methionine is bound by residues glycine 73, leucine 78, 124–125 (VE), and arginine 139.

The protein belongs to the methyltransferase superfamily. RNA methyltransferase RsmG family.

Its subcellular location is the cytoplasm. It carries out the reaction guanosine(527) in 16S rRNA + S-adenosyl-L-methionine = N(7)-methylguanosine(527) in 16S rRNA + S-adenosyl-L-homocysteine. Its function is as follows. Specifically methylates the N7 position of guanine in position 527 of 16S rRNA. This chain is Ribosomal RNA small subunit methyltransferase G, found in Haemophilus influenzae (strain PittEE).